The sequence spans 370 residues: UDP-N-acetylglucosamine--N-acetylmuramyl-(pentapeptide) pyrophosphoryl-undecaprenol N-acetylglucosamine transferase (370 aa).

Residues 20–22, asparagine 134, arginine 170, serine 204, isoleucine 257, and glutamine 301 contribute to the UDP-N-acetyl-alpha-D-glucosamine site; that span reads TAG.

The protein belongs to the glycosyltransferase 28 family. MurG subfamily.

It localises to the cell membrane. The enzyme catalyses di-trans,octa-cis-undecaprenyl diphospho-N-acetyl-alpha-D-muramoyl-L-alanyl-D-glutamyl-meso-2,6-diaminopimeloyl-D-alanyl-D-alanine + UDP-N-acetyl-alpha-D-glucosamine = di-trans,octa-cis-undecaprenyl diphospho-[N-acetyl-alpha-D-glucosaminyl-(1-&gt;4)]-N-acetyl-alpha-D-muramoyl-L-alanyl-D-glutamyl-meso-2,6-diaminopimeloyl-D-alanyl-D-alanine + UDP + H(+). It participates in cell wall biogenesis; peptidoglycan biosynthesis. Functionally, cell wall formation. Catalyzes the transfer of a GlcNAc subunit on undecaprenyl-pyrophosphoryl-MurNAc-pentapeptide (lipid intermediate I) to form undecaprenyl-pyrophosphoryl-MurNAc-(pentapeptide)GlcNAc (lipid intermediate II). The polypeptide is UDP-N-acetylglucosamine--N-acetylmuramyl-(pentapeptide) pyrophosphoryl-undecaprenol N-acetylglucosamine transferase (Corynebacterium jeikeium (strain K411)).